The following is a 160-amino-acid chain: Cyclic pyranopterin monophosphate synthase (160 aa).

Substrate contacts are provided by residues 75-77 (MCH) and 115-116 (ME). Residue D130 is part of the active site.

Belongs to the MoaC family. In terms of assembly, homohexamer; trimer of dimers.

The enzyme catalyses (8S)-3',8-cyclo-7,8-dihydroguanosine 5'-triphosphate = cyclic pyranopterin phosphate + diphosphate. It functions in the pathway cofactor biosynthesis; molybdopterin biosynthesis. In terms of biological role, catalyzes the conversion of (8S)-3',8-cyclo-7,8-dihydroguanosine 5'-triphosphate to cyclic pyranopterin monophosphate (cPMP). The sequence is that of Cyclic pyranopterin monophosphate synthase from Lysinibacillus sphaericus (strain C3-41).